Here is an 860-residue protein sequence, read N- to C-terminus: Protein argonaute-2 (860 aa).

The tract at residues 1–30 is disordered; the sequence is MYSGAGPALAPPAPPPPPIQGYAFKPPPRP. Tyr-2 carries the 3'-nitrotyrosine modification. Over residues 9-30 the composition is skewed to pro residues; it reads LAPPAPPPPPIQGYAFKPPPRP. The PAZ domain occupies 230-349; sequence PVIEFVCEVL…LPLEVCNIVA (120 aa). The interval 312–317 is interaction with guide RNA; sequence YFKDRH. A Phosphoserine modification is found at Ser-388. The Piwi domain maps to 518–819; that stretch reads LVVVILPGKT…VAFRARYHLV (302 aa). The interaction with guide RNA stretch occupies residues 525–567; that stretch reads GKTPVYAEVKRVGDTVLGMATQCVQMKNVQRTTPQTLSNLWLK. An interaction with GW182 family members region spans residues 588-591; the sequence is FQQP. Asp-598 serves as a coordination point for a divalent metal cation. The tract at residues 651 to 661 is interaction with GW182 family members; that stretch reads LIQFYKSTRFK. Asp-670 is a binding site for a divalent metal cation. Pro-701 carries the 4-hydroxyproline modification. 3 interaction with guide RNA regions span residues 710-711, 754-762, and 791-813; these read KR, HAGIQGTSR, and YVRC…VAFR. His-808 lines the a divalent metal cation pocket. 4 positions are modified to phosphoserine: Ser-825, Ser-829, Ser-832, and Ser-835.

It belongs to the argonaute family. Ago subfamily. Interacts with DICER1 through its Piwi domain and with TARBP2 during assembly of the RNA-induced silencing complex (RISC). Together, DICER1, AGO2 and TARBP2 constitute the trimeric RISC loading complex (RLC), or micro-RNA (miRNA) loading complex (miRLC). Within the RLC/miRLC, DICER1 and TARBP2 are required to process precursor miRNAs (pre-miRNAs) to mature miRNAs and then load them onto AGO2. AGO2 bound to the mature miRNA constitutes the minimal RISC and may subsequently dissociate from DICER1 and TARBP2. Note however that the term RISC has also been used to describe the trimeric RLC/miRLC. The formation of RISC complexes containing siRNAs rather than miRNAs appears to occur independently of DICER1. Interacts with AGO1. Also interacts with DDB1, DDX5, DDX6, DDX20, DHX30, DHX36, DDX47, DHX9, ELAVL, FXR1, GEMIN4, HNRNPF, IGF2BP1, ILF3, IMP8, MATR3, PABPC1, PRMT5, P4HA1, P4HB, RBM4, SART3, TNRC6A, TNRC6B, UPF1 and YBX1. Interacts with the P-body components DCP1A and XRN1. Associates with polysomes and messenger ribonucleoproteins (mNRPs). Interacts with RBM4; the interaction is modulated under stress-induced conditions, occurs under both cell proliferation and differentiation conditions and in an RNA- and phosphorylation-independent manner. Interacts with LIMD1, WTIP and AJUBA. Interacts with TRIM71; the interaction increases in presence of RNA. Interacts with APOBEC3G in an RNA-dependent manner. Interacts with APOBEC3A, APOBEC3C, APOBEC3F and APOBEC3H. Interacts with DICER1, TARBP2, EIF6, MOV10 and RPL7A (60S ribosome subunit); they form a large RNA-induced silencing complex (RISC). Interacts with FMR1. Interacts with ZFP36. Interacts with RC3H1; the interaction is RNA independent. Found in a complex composed of AGO2, CHD7 and ARB2A. Interacts with SND1 and SYT11. Interacts with CLNK. Interacts with GARRE1. Interacts with GRB2; this interaction is important for the formation of a ternary complex containing GRB2, AGO2 and DICER1. Requires Mg(2+) as cofactor. Mn(2+) serves as cofactor. Hydroxylated. 4-hydroxylation appears to enhance protein stability but is not required for miRNA-binding or endonuclease activity. In terms of processing, ubiquitinated on surface-exposed lysines by a SCF-like E3 ubiquitin-protein ligase complex containing ZSWIM8 during target-directed microRNA degradation (TDMD), a process that mediates degradation of microRNAs (miRNAs). Ubiquitination by the SCF-like E3 ubiquitin-protein ligase complex containing ZSWIM8 leads to its subsequent degradation, thereby exposing miRNAs for degradation. ZSWIM8 recognizes and binds AGO2 when it is engaged with a TDMD target. Post-translationally, phosphorylation at Ser-388 by AKT3; leads to up-regulate translational repression of microRNA target and down-regulate endonucleolytic cleavage. A phosphorylation cycle of C-terminal serine cluster (Ser-825-Ser-835) regulates the release of target mRNAs. Target-binding leads to phosphorylation of these residues by CSNK1A1, which reduces the affinity of AGO2 for mRNA and enables target release. The ANKRD52-PPP6C phosphatase complex dephosphorylates the residues, which primes AGO2 for binding a new target.

The protein resides in the cytoplasm. It localises to the P-body. Its subcellular location is the nucleus. The catalysed reaction is Endonucleolytic cleavage to 5'-phosphomonoester.. In terms of biological role, required for RNA-mediated gene silencing (RNAi) by the RNA-induced silencing complex (RISC). The 'minimal RISC' appears to include AGO2 bound to a short guide RNA such as a microRNA (miRNA) or short interfering RNA (siRNA). These guide RNAs direct RISC to complementary mRNAs that are targets for RISC-mediated gene silencing. The precise mechanism of gene silencing depends on the degree of complementarity between the miRNA or siRNA and its target. Binding of RISC to a perfectly complementary mRNA generally results in silencing due to endonucleolytic cleavage of the mRNA specifically by AGO2. Binding of RISC to a partially complementary mRNA results in silencing through inhibition of translation, and this is independent of endonuclease activity. May inhibit translation initiation by binding to the 7-methylguanosine cap, thereby preventing the recruitment of the translation initiation factor eIF4-E. May also inhibit translation initiation via interaction with EIF6, which itself binds to the 60S ribosomal subunit and prevents its association with the 40S ribosomal subunit. The inhibition of translational initiation leads to the accumulation of the affected mRNA in cytoplasmic processing bodies (P-bodies), where mRNA degradation may subsequently occur. In some cases RISC-mediated translational repression is also observed for miRNAs that perfectly match the 3' untranslated region (3'-UTR). Can also up-regulate the translation of specific mRNAs under certain growth conditions. Binds to the AU element of the 3'-UTR of the TNF (TNF-alpha) mRNA and up-regulates translation under conditions of serum starvation. Also required for transcriptional gene silencing (TGS), in which short RNAs known as antigene RNAs or agRNAs direct the transcriptional repression of complementary promoter regions. The protein is Protein argonaute-2 (AGO2) of Bos taurus (Bovine).